Reading from the N-terminus, the 110-residue chain is Large ribosomal subunit protein uL22 (110 aa).

The protein belongs to the universal ribosomal protein uL22 family. Part of the 50S ribosomal subunit.

Its function is as follows. This protein binds specifically to 23S rRNA; its binding is stimulated by other ribosomal proteins, e.g. L4, L17, and L20. It is important during the early stages of 50S assembly. It makes multiple contacts with different domains of the 23S rRNA in the assembled 50S subunit and ribosome. Functionally, the globular domain of the protein is located near the polypeptide exit tunnel on the outside of the subunit, while an extended beta-hairpin is found that lines the wall of the exit tunnel in the center of the 70S ribosome. The sequence is that of Large ribosomal subunit protein uL22 from Idiomarina loihiensis (strain ATCC BAA-735 / DSM 15497 / L2-TR).